A 346-amino-acid polypeptide reads, in one-letter code: Short-wave-sensitive opsin 1 (346 aa).

At 1 to 31 (MSGEDEFYLFQNISSVGPWDGPQYHIAPVWA) the chain is on the extracellular side. N-linked (GlcNAc...) asparagine glycosylation is present at N12. The chain crosses the membrane as a helical span at residues 32–56 (FHLQAAFMGFVFFAGTPLNATVLVA). Residues 57–68 (TLHYKKLRQPLN) are Cytoplasmic-facing. Residues 69-94 (YILVNVSLGGFLFCIFSVFTVFIASC) traverse the membrane as a helical segment. Over 95–108 (HGYFLFGRHVCALE) the chain is Extracellular. An intrachain disulfide couples C105 to C182. The chain crosses the membrane as a helical span at residues 109 to 128 (AFLGSVAGLVTGWSLAFLAF). Over 129 to 147 (ERYLVICKPFGNIRFNSKH) the chain is Cytoplasmic. The helical transmembrane segment at 148-171 (ALTVVLITWTIGIGVSIPPFFGWS) threads the bilayer. Residues 172-197 (RFIPEGLQCSCGPDWYTVGTKYRSEH) lie on the Extracellular side of the membrane. Residues 198 to 225 (YTWFLFIFCFIIPLSLICFSYFQLLRTL) traverse the membrane as a helical segment. Topologically, residues 226-247 (RAVAAQQQESATTQKAEREVSH) are cytoplasmic. The chain crosses the membrane as a helical span at residues 248–271 (MVVVMVGSFCLCYVPYAALAMYMV). The Extracellular portion of the chain corresponds to 272-279 (NNRNHGLY). The chain crosses the membrane as a helical span at residues 280 to 304 (LRLVTIPAFFSKSSCVYNPIIYCFM). K291 is subject to N6-(retinylidene)lysine. Over 305 to 346 (NKQFRACILEMVCRKPMTDESDMSGSQKTEVSTVSSSKVGPH) the chain is Cytoplasmic. Positions 322–346 (TDESDMSGSQKTEVSTVSSSKVGPH) are disordered. The span at 330 to 346 (SQKTEVSTVSSSKVGPH) shows a compositional bias: low complexity.

The protein belongs to the G-protein coupled receptor 1 family. Opsin subfamily. Post-translationally, phosphorylated on some or all of the serine and threonine residues present in the C-terminal region. Expressed in cone photoreceptor cells.

Its subcellular location is the cell membrane. It is found in the photoreceptor inner segment. The protein resides in the cell projection. The protein localises to the cilium. It localises to the photoreceptor outer segment. Its subcellular location is the cytoplasm. It is found in the perinuclear region. In terms of biological role, visual pigments are the light-absorbing molecules that mediate vision. They consist of an apoprotein, opsin, covalently linked to cis-retinal. Required for the maintenance of cone outer segment organization in the ventral retina, but not essential for the maintenance of functioning cone photoreceptors. Involved in ensuring correct abundance and localization of retinal membrane proteins. May increase spectral sensitivity in dim light. The sequence is that of Short-wave-sensitive opsin 1 (Opn1sw) from Rattus norvegicus (Rat).